The following is a 237-amino-acid chain: 2,3-bisphosphoglycerate-dependent phosphoglycerate mutase (237 aa).

Residues 8 to 15 (RHGQSQWN), 21 to 22 (TG), Arg60, 87 to 90 (ERHY), Lys98, 114 to 115 (RR), and 180 to 181 (GN) contribute to the substrate site. The active-site Tele-phosphohistidine intermediate is the His9. Residue Glu87 is the Proton donor/acceptor of the active site.

It belongs to the phosphoglycerate mutase family. BPG-dependent PGAM subfamily. In terms of assembly, homodimer.

The catalysed reaction is (2R)-2-phosphoglycerate = (2R)-3-phosphoglycerate. Its pathway is carbohydrate degradation; glycolysis; pyruvate from D-glyceraldehyde 3-phosphate: step 3/5. Its function is as follows. Catalyzes the interconversion of 2-phosphoglycerate and 3-phosphoglycerate. This Caulobacter sp. (strain K31) protein is 2,3-bisphosphoglycerate-dependent phosphoglycerate mutase.